We begin with the raw amino-acid sequence, 309 residues long: GTP cyclohydrolase FolE2 (309 aa).

Belongs to the GTP cyclohydrolase IV family.

It carries out the reaction GTP + H2O = 7,8-dihydroneopterin 3'-triphosphate + formate + H(+). Its pathway is cofactor biosynthesis; 7,8-dihydroneopterin triphosphate biosynthesis; 7,8-dihydroneopterin triphosphate from GTP: step 1/1. Functionally, converts GTP to 7,8-dihydroneopterin triphosphate. This chain is GTP cyclohydrolase FolE2, found in Serratia proteamaculans (strain 568).